We begin with the raw amino-acid sequence, 426 residues long: Diaminobutyrate--2-oxoglutarate transaminase (426 aa).

N6-(pyridoxal phosphate)lysine is present on Lys-274.

Belongs to the class-III pyridoxal-phosphate-dependent aminotransferase family. Pyridoxal 5'-phosphate serves as cofactor.

The catalysed reaction is L-2,4-diaminobutanoate + 2-oxoglutarate = L-aspartate 4-semialdehyde + L-glutamate. It participates in amine and polyamine biosynthesis; ectoine biosynthesis; L-ectoine from L-aspartate 4-semialdehyde: step 1/3. Functionally, catalyzes reversively the conversion of L-aspartate beta-semialdehyde (ASA) to L-2,4-diaminobutyrate (DABA) by transamination with L-glutamate. In Oceanobacillus iheyensis (strain DSM 14371 / CIP 107618 / JCM 11309 / KCTC 3954 / HTE831), this protein is Diaminobutyrate--2-oxoglutarate transaminase (ectB).